We begin with the raw amino-acid sequence, 309 residues long: Mitochondrial succinate-fumarate transporter 1 (309 aa).

Solcar repeat units follow at residues isoleucine 11 to alanine 96, arginine 108 to leucine 196, and leucine 208 to leucine 298. The next 6 helical transmembrane spans lie at alanine 17 to isoleucine 37, valine 65 to leucine 85, phenylalanine 111 to valine 131, glycine 171 to asparagine 191, methionine 214 to valine 234, and glycine 273 to aspartate 293.

Belongs to the mitochondrial carrier (TC 2.A.29) family. Expressed in root tips, cotyledons, hypocotyls, leaves, trichomes, stems, flowers, carpels, anthers, pollen and abscission zone of siliques.

It is found in the mitochondrion inner membrane. Functionally, may transport cytoplasmic succinate, derived from fatty acid oxidation, into the mitochondrial matrix in exchange of fumarate during lipid mobilization in seed germination. Conversion of seed-reserved triacylglycerols into sucrose is necessary for growth before the onset of photosynthesis and involves fatty acid beta-oxidation, the glyoxylate cycle and gluconeogenesis. In Arabidopsis thaliana (Mouse-ear cress), this protein is Mitochondrial succinate-fumarate transporter 1 (SFC1).